We begin with the raw amino-acid sequence, 92 residues long: DNA-directed RNA polymerase subunit Rpo11 (92 aa).

This sequence belongs to the archaeal Rpo11/eukaryotic RPB11/RPC19 RNA polymerase subunit family. Part of the RNA polymerase complex.

It localises to the cytoplasm. The enzyme catalyses RNA(n) + a ribonucleoside 5'-triphosphate = RNA(n+1) + diphosphate. In terms of biological role, DNA-dependent RNA polymerase (RNAP) catalyzes the transcription of DNA into RNA using the four ribonucleoside triphosphates as substrates. This chain is DNA-directed RNA polymerase subunit Rpo11, found in Methanosarcina acetivorans (strain ATCC 35395 / DSM 2834 / JCM 12185 / C2A).